Consider the following 342-residue polypeptide: Fructose-1,6-bisphosphatase class 1 (342 aa).

Mg(2+) is bound by residues Glu97, Asp119, Leu121, and Asp122. Substrate-binding positions include 122 to 125, Asn215, Tyr247, and Lys280; that span reads DGSS. Residue Glu286 coordinates Mg(2+).

Belongs to the FBPase class 1 family. Homotetramer. It depends on Mg(2+) as a cofactor.

Its subcellular location is the cytoplasm. The catalysed reaction is beta-D-fructose 1,6-bisphosphate + H2O = beta-D-fructose 6-phosphate + phosphate. The protein operates within carbohydrate biosynthesis; gluconeogenesis. This chain is Fructose-1,6-bisphosphatase class 1, found in Leptospira interrogans serogroup Icterohaemorrhagiae serovar copenhageni (strain Fiocruz L1-130).